The primary structure comprises 83 residues: Large ribosomal subunit protein bL31B (83 aa).

The protein belongs to the bacterial ribosomal protein bL31 family. Type B subfamily. As to quaternary structure, part of the 50S ribosomal subunit.

The polypeptide is Large ribosomal subunit protein bL31B (Tropheryma whipplei (strain TW08/27) (Whipple's bacillus)).